Consider the following 146-residue polypeptide: Small ribosomal subunit protein uS9 (146 aa).

It belongs to the universal ribosomal protein uS9 family. Component of the small ribosomal subunit.

It is found in the cytoplasm. In terms of biological role, component of the small ribosomal subunit. The ribosome is a large ribonucleoprotein complex responsible for the synthesis of proteins in the cell. The sequence is that of Small ribosomal subunit protein uS9 (rps16) from Ictalurus punctatus (Channel catfish).